A 295-amino-acid chain; its full sequence is Acetylglutamate kinase (295 aa).

Residues 61-62, R83, and N187 contribute to the substrate site; that span reads GG.

It belongs to the acetylglutamate kinase family. ArgB subfamily.

The protein localises to the cytoplasm. It catalyses the reaction N-acetyl-L-glutamate + ATP = N-acetyl-L-glutamyl 5-phosphate + ADP. It functions in the pathway amino-acid biosynthesis; L-arginine biosynthesis; N(2)-acetyl-L-ornithine from L-glutamate: step 2/4. Catalyzes the ATP-dependent phosphorylation of N-acetyl-L-glutamate. This chain is Acetylglutamate kinase, found in Methanocorpusculum labreanum (strain ATCC 43576 / DSM 4855 / Z).